Here is an 84-residue protein sequence, read N- to C-terminus: Large ribosomal subunit protein bL27 (84 aa).

Residues 1–25 form a disordered region; the sequence is MAHKKAGGSSKNGRDSAGKRLGVKR.

The protein belongs to the bacterial ribosomal protein bL27 family.

The chain is Large ribosomal subunit protein bL27 from Syntrophotalea carbinolica (strain DSM 2380 / NBRC 103641 / GraBd1) (Pelobacter carbinolicus).